The chain runs to 383 residues: Protein COS5 (383 aa).

At 1-42 (MKENELKNEKSVDVLSFKQLESQKIVLPQDLFRSSFTWFCYE) the chain is on the cytoplasmic side. Residues 43 to 63 (IYKSLAFPIWMLLWLPLSVWW) traverse the membrane as a helical segment. Residues 64-72 (KLSNNCIYP) lie on the Extracellular side of the membrane. The helical transmembrane segment at 73 to 93 (LIVSLLVLFLGPIFVLVICGL) threads the bilayer. At 94–232 (SRKRSLSKQL…RSKLTWFLKR (139 aa)) the chain is on the cytoplasmic side. A helical membrane pass occupies residues 233-253 (IFTIYSLPLWLAFLNCICVSQ). Residue His254 is a topological domain, extracellular. The helical transmembrane segment at 255-275 (FCLAFRILCPGLFFLMMVWLF) threads the bilayer. The Cytoplasmic segment spans residues 276–383 (QNMRTTALLV…SRNEESLMKK (108 aa)).

The protein belongs to the DUP/COS family.

The protein resides in the membrane. This is Protein COS5 (COS5) from Saccharomyces cerevisiae (strain ATCC 204508 / S288c) (Baker's yeast).